Consider the following 70-residue polypeptide: UPF0352 protein Sfri_2492 (70 aa).

Belongs to the UPF0352 family.

In Shewanella frigidimarina (strain NCIMB 400), this protein is UPF0352 protein Sfri_2492.